Reading from the N-terminus, the 282-residue chain is Bifunctional protein FolD (282 aa).

NADP(+)-binding positions include 164-166 (GRS) and Ser-189.

The protein belongs to the tetrahydrofolate dehydrogenase/cyclohydrolase family. Homodimer.

The catalysed reaction is (6R)-5,10-methylene-5,6,7,8-tetrahydrofolate + NADP(+) = (6R)-5,10-methenyltetrahydrofolate + NADPH. It carries out the reaction (6R)-5,10-methenyltetrahydrofolate + H2O = (6R)-10-formyltetrahydrofolate + H(+). Its pathway is one-carbon metabolism; tetrahydrofolate interconversion. Functionally, catalyzes the oxidation of 5,10-methylenetetrahydrofolate to 5,10-methenyltetrahydrofolate and then the hydrolysis of 5,10-methenyltetrahydrofolate to 10-formyltetrahydrofolate. The chain is Bifunctional protein FolD from Streptococcus suis (strain 98HAH33).